Reading from the N-terminus, the 236-residue chain is Sperm flagellar protein 1 (236 aa).

Positions Glu7–Glu112 constitute a Calponin-homology (CH) domain. The disordered stretch occupies residues Gln115–Leu176. Residues Val183 to Arg236 are essential for homodimerization and microtubule bundling activity.

Homodimer. Interacts with actin, TJP1, CGN and CDH1. Expressed in the intestinal epithelial cells (at protein level).

It is found in the cytoplasm. Its subcellular location is the cell projection. The protein resides in the cilium. It localises to the flagellum. The protein localises to the cytoskeleton. It is found in the cilium axoneme. Its subcellular location is the apical cell membrane. The protein resides in the basolateral cell membrane. It localises to the stress fiber. The protein localises to the microvillus. It is found in the lamellipodium. Its subcellular location is the filopodium. Its function is as follows. Microtubule-associated protein involved in the stabilization of microtubules along the axis of migration during radial intercalation. Promotes the establishment and stabilization of an axis of microtubules required for the active migration of cells into the outer epithelium. Microtubule-associated protein that promotes microtubule bundling and stabilizes microtubules against depolymerization in response to cold shock. Essential for ciliary central apparatus formation which requires both its microtubule-binding and bundling activities and for ciliary localization of HYDIN and SPAG6 in ependymal cilia. Binds actin in intestinal epithelial cells (IECs), essential for IECs survival and contributes to formation of filopodia and lamellipodia in migrating IECs. Regulates planar cell polarity signaling pathway and asymmetric microtubule accumulation in ciliated epithelia. The protein is Sperm flagellar protein 1 (SPEF1) of Homo sapiens (Human).